A 223-amino-acid chain; its full sequence is Serine/threonine/tyrosine-interacting protein (223 aa).

A Tyrosine-protein phosphatase domain is found at 28-176 (EMQEILPGLF…LQEYEAIYLA (149 aa)). Positions 76 to 78 (FQQ) match the Interaction with FBXW7 motif. 3 positions are modified to phosphoserine: S184, S193, and S201. Residues 197–223 (GTTGSLKRTHEEEDDFGTMQVATAQNG) form a disordered region.

Belongs to the protein-tyrosine phosphatase family. Non-receptor class subfamily. Interacts with MAPK1; independently of MAPK1 phosphorylation status. Interacts with CARHSP1/Crhsp-24. Interacts (via FQQ motif) with FBXW7 (via F-box domain); the interaction is direct and prevents FBXW7 interaction with SKP1, a component of the SCF(FBXW7) complex.

Its subcellular location is the nucleus. The protein resides in the cytoplasm. It localises to the cytosol. Its function is as follows. Catalytically inactive phosphatase. Acts as a nuclear anchor for MAPK1/MAPK3 (ERK1/ERK2). Modulates cell-fate decisions and cell migration by spatiotemporal regulation of MAPK1/MAPK3 (ERK1/ERK2). By binding to the F-box of FBXW7, prevents the assembly of FBXW7 into the SCF E3 ubiquitin-protein ligase complex, and thereby inhibits degradation of its substrates. Plays a role in spermatogenesis. The polypeptide is Serine/threonine/tyrosine-interacting protein (STYX) (Pongo abelii (Sumatran orangutan)).